We begin with the raw amino-acid sequence, 415 residues long: Probable N-acetyl-gamma-glutamyl-phosphate reductase, chloroplastic (415 aa).

A chloroplast-targeting transit peptide spans 1 to 74 (MGSTALGGGA…SGVKSGEEVR (74 aa)). The interval 48–68 (VRASVASSPQKQHSPKTSGVK) is disordered. Over residues 56–67 (PQKQHSPKTSGV) the composition is skewed to polar residues. Cysteine 219 is an active-site residue.

The protein belongs to the NAGSA dehydrogenase family. Type 1 subfamily. In terms of assembly, homotetramer.

It is found in the plastid. The protein resides in the chloroplast. The catalysed reaction is N-acetyl-L-glutamate 5-semialdehyde + phosphate + NADP(+) = N-acetyl-L-glutamyl 5-phosphate + NADPH + H(+). It participates in amino-acid biosynthesis; L-arginine biosynthesis; N(2)-acetyl-L-ornithine from L-glutamate: step 3/4. This chain is Probable N-acetyl-gamma-glutamyl-phosphate reductase, chloroplastic, found in Oryza sativa subsp. japonica (Rice).